The primary structure comprises 833 residues: Leucine--tRNA ligase (833 aa).

The 'HIGH' region signature appears at 41–52 (PYPSGAGLHVGH). The 'KMSKS' region motif lies at 610–614 (KMSKS). Lys613 is an ATP binding site.

This sequence belongs to the class-I aminoacyl-tRNA synthetase family.

It localises to the cytoplasm. The catalysed reaction is tRNA(Leu) + L-leucine + ATP = L-leucyl-tRNA(Leu) + AMP + diphosphate. The polypeptide is Leucine--tRNA ligase (Streptococcus equi subsp. zooepidemicus (strain MGCS10565)).